The following is a 160-amino-acid chain: Small ribosomal subunit protein uS9 (160 aa).

The protein belongs to the universal ribosomal protein uS9 family.

In Xanthobacter autotrophicus (strain ATCC BAA-1158 / Py2), this protein is Small ribosomal subunit protein uS9.